A 165-amino-acid polypeptide reads, in one-letter code: Lipoprotein signal peptidase (165 aa).

The next 3 membrane-spanning stretches (helical) occupy residues 9–29 (LLTI…VLLY), 69–89 (KYFL…FLFL), and 100–120 (FSLI…FFYN). Active-site residues include aspartate 124 and aspartate 142. A helical transmembrane segment spans residues 133–153 (WSFPTFNFADIFISLGTLIFV).

This sequence belongs to the peptidase A8 family.

It is found in the cell inner membrane. The enzyme catalyses Release of signal peptides from bacterial membrane prolipoproteins. Hydrolyzes -Xaa-Yaa-Zaa-|-(S,diacylglyceryl)Cys-, in which Xaa is hydrophobic (preferably Leu), and Yaa (Ala or Ser) and Zaa (Gly or Ala) have small, neutral side chains.. It functions in the pathway protein modification; lipoprotein biosynthesis (signal peptide cleavage). This protein specifically catalyzes the removal of signal peptides from prolipoproteins. This Chlamydia felis (strain Fe/C-56) (Chlamydophila felis) protein is Lipoprotein signal peptidase.